The chain runs to 102 residues: Large ribosomal subunit protein uL23 (102 aa).

Belongs to the universal ribosomal protein uL23 family. In terms of assembly, part of the 50S ribosomal subunit. Contacts protein L29, and trigger factor when it is bound to the ribosome.

One of the early assembly proteins it binds 23S rRNA. One of the proteins that surrounds the polypeptide exit tunnel on the outside of the ribosome. Forms the main docking site for trigger factor binding to the ribosome. The protein is Large ribosomal subunit protein uL23 of Paramagnetospirillum magneticum (strain ATCC 700264 / AMB-1) (Magnetospirillum magneticum).